The sequence spans 180 residues: uncharacterized protein (180 aa).

The 150-residue stretch at 31–180 (LLVRTAEWLR…HLFEKEITAE (150 aa)) folds into the N-acetyltransferase domain.

It belongs to the acetyltransferase family.

This is an uncharacterized protein from Bacillus subtilis (strain 168).